The primary structure comprises 896 residues: Probable DNA-directed RNA polymerase (896 aa).

Catalysis depends on residues aspartate 546, lysine 617, and aspartate 798.

It belongs to the phage and mitochondrial RNA polymerase family.

It localises to the mitochondrion. It carries out the reaction RNA(n) + a ribonucleoside 5'-triphosphate = RNA(n+1) + diphosphate. Its function is as follows. DNA-dependent RNA polymerase catalyzes the transcription of DNA into RNA using the four ribonucleoside triphosphates as substrates. This is Probable DNA-directed RNA polymerase from Neurospora crassa.